The chain runs to 1019 residues: Alpha-mannosidase At3g26720 (1019 aa).

A signal peptide spans 1–22 (MAVKCFSLYLILAAIVIGGVTS). 2 residues coordinate Zn(2+): His47 and Asp49. Asn64 carries N-linked (GlcNAc...) asparagine glycosylation. A Zn(2+)-binding site is contributed by Asp169. Asn278 and Asn336 each carry an N-linked (GlcNAc...) asparagine glycan. Position 410 (His410) interacts with Zn(2+). Residues Cys466 and Cys474 are joined by a disulfide bond. N-linked (GlcNAc...) asparagine glycosylation is found at Asn470, Asn638, Asn730, and Asn820. A disulfide bridge connects residues Cys824 and Cys829.

Belongs to the glycosyl hydrolase 38 family. As to quaternary structure, homodimer. Requires Zn(2+) as cofactor.

The enzyme catalyses Hydrolysis of terminal, non-reducing alpha-D-mannose residues in alpha-D-mannosides.. Its function is as follows. Liberates mannose from p-nitrophenyl-alpha-D-mannoside in vitro. The protein is Alpha-mannosidase At3g26720 of Arabidopsis thaliana (Mouse-ear cress).